A 154-amino-acid chain; its full sequence is uncharacterized protein (154 aa).

The Zn(2+) site is built by C4, C7, C16, C19, C24, C28, H32, and C36. The HIT-type zinc finger occupies C4–C36.

This is an uncharacterized protein from Schizosaccharomyces pombe (strain 972 / ATCC 24843) (Fission yeast).